Consider the following 449-residue polypeptide: Adenylosuccinate synthetase isozyme 1 A (449 aa).

The span at methionine 1 to proline 10 shows a compositional bias: polar residues. The interval methionine 1 to glycine 22 is disordered. GTP contacts are provided by residues glycine 34–lysine 40 and glycine 62–threonine 64. The Proton acceptor role is filled by aspartate 35. Residues aspartate 35 and glycine 62 each coordinate Mg(2+). Aspartate 35 is a binding site for substrate. Residues aspartate 35–lysine 38, asparagine 60–histidine 63, threonine 155, arginine 169, asparagine 248, threonine 263, and arginine 327 each bind IMP. Histidine 63 (proton donor) is an active-site residue. Valine 323 to arginine 329 lines the substrate pocket. GTP is bound by residues arginine 329, lysine 355–aspartate 357, and glycine 437–lysine 440.

Belongs to the adenylosuccinate synthetase family. As to quaternary structure, homodimer. Requires Mg(2+) as cofactor.

The protein localises to the cytoplasm. The enzyme catalyses IMP + L-aspartate + GTP = N(6)-(1,2-dicarboxyethyl)-AMP + GDP + phosphate + 2 H(+). Its pathway is purine metabolism; AMP biosynthesis via de novo pathway; AMP from IMP: step 1/2. Its function is as follows. Component of the purine nucleotide cycle (PNC), which interconverts IMP and AMP to regulate the nucleotide levels in various tissues, and which contributes to glycolysis and ammoniagenesis. Catalyzes the first committed step in the biosynthesis of AMP from IMP. This is Adenylosuccinate synthetase isozyme 1 A (adss1a) from Salmo salar (Atlantic salmon).